The sequence spans 3317 residues: MRHPPVTWCAMLWLLMLVSGSWGQVNRLPFFTNHFFDTYLLISEDTPVGSSVTQLLARDMDNDPLVFGVSGEEASRFFAVEPDTGVVWLRQPLDRETKSEFTVEFSVSDHQGVITRKVNIQVGDVNDNAPTFHNQPYSVRIPENTPVGTPIFIVNATDPDLGAGGSVLYSFQPPSQFFAIDSARGIVTVIRELDYEVTQAYQLTVNATDQDKTRPLSTLANLAIIITDVQDMDPIFINLPYSTNIYEHSPPGTTVRVITAVDQDKGRPRGIGYTIVSGNTNSIFALDYISGALTLNGLLDRENPLYSHGFILTVKGTELNDDRSPSDATVTTTFNILVIDINDNAPEFNSSEYSVAITELAQVGFALPLFIQVVDKDEGLNSMFEVYLVGNNSHHFIISPTSVQGKADIRIRVAIPLDYETVDRYDFDLFANESVPDHVGYAKVKITLINENDNRPIFSQPLYNVSLYENITVGTSVLTVLATDNDVGTFGEVNYFFSDDPDRFSLDKDTGLIMLIARLDYELIQRFTLTVIARDGGGEETTGRVRINVLDVNDNVPTFQKDAYVGALRENEPSVTQLVRLRATDEDSPPNNLITYSIVNASAFGSYFDISVYEGYGVISVSRPLDYEQIPNGLIYLTVMAKDAGNPPLYSTVPVTIEVFDENDNPPTFSKPAYFVSVVENIMAGATVLFLNATDLDRSREYGQESIIYSLEGSSQFRINARSGEITTTSLLDRETKAEYILIVRAVDGGVGHNQKTGIATVNVTLLDINDNHPTWKDAPYYINLVEMTPPDSDVTTVVAVDPDLGKNGTLVYSIQPPNKFYSLNSTTGKIRTTHVMLDRENPDPVEAELMRKIIVSVTDCGRPPLKATSSATVFVNLLDLNDNDPTFQNLPFVAEVLEGTPAGVSVYQVVAIDLDEGLNGLVSYRMQVGMPRMDFVINSTSGVVTTTAELDRERIAEYQLRVVASDAGTPTKSSTSTLTIRVLDVNDETPTFFPAVYNVSVSEDVPREFRVVWLNCTDNDVGLNAELSYFITAGNVDGKFSVGYRDAVVRTVVGLDRETTAAYTLVLEAIDNVPVGKRRTGTATVFVTVLDVNDNRPIFLQSSYEASVPEDIPEGHSIVQLKATDADEGEFGRVWYRILHGNHGNNFRLHVSSGLLVRGPRPLDRERNSSHVLMAEAYNHDLGPMRSSVRVIVYVEDVNDEAPVFTQQQYNRLGLRETAGIGTSVIVVRATDRDTGDGGLVNYRILSGAEGKFEIDESTGLIVTVDYLDYETKTSYLMNVSATDGAPPFNQGFCSVYVTLLNELDEAVQFSNASYEAVIMENLALGTEIVRVQAYSIDNLNQITYRFDAYTSAQAKALFKIDAITGVITVKGLVDREKGDFYTLTVVADDGGPKVDSTVKVYVTVLDENDNSPRFDFTSDSAISVPEDCPVGQRVATVKARDPDAGSNGQVVFSLASGNIAGAFEIITSNDSIGEVFVAKPLDREELDHYILKIVASDRGTPPRKKDHILQVTILDVNDNPPVIESPFGYNVSVNENVGGGTSVVQVRATDRDIGINSVLSYYITEGNEDMTFRMDRISGEIATRPAPPDRERQNFYHLVVTVEDEGTPTLSATTHVYVTIVDENDNAPVFQQPHYEVVLDEGPDTVNTSLITVQALDLDEGPNGTVTYAIVAGNIINTFRINRRTGVITAAKELDYEISHGRYTLIVTATDQCPILSHRLTSTTTVLVNVNDINDNVPTFPRDYEGPFDVTEGQPGPRVWTFLAHDRDSGPNGQVEYSVVDGDPLGEFVISPVEGVLRVRKDVELDRETIAFYNLTICARDRGVPPLSSTMLVGIRVLDINDNDPVLLNLPMNITISENSPVSSFVAHVLASDADSGCNALLTFNITAGNRERAFFINATTGIVTVNRPLDRERIPEYRLTVSVKDNPENPRIARKDFDLLLVSLADENDNHPLFTEGTYQAEVMENSPAGTPLTVLNGPILALDADEDVYAVVTYQLLGTHSDLFVIDNSTGVVTVRSGVIIDREAFSPPFLELLLLAEDVGQLNGTAYLFITILDDNDNWPTFSPPAYTVHLLENCPPGFSVLQITATDEDSGLNGELVYRIEAGAQDRFLIHPVTGVIRVGNATIDREEQESYRLTVVATDRGTVPLSGTATVTILIDDINDSRPEFLNPIQTVSVLESTEPGTVIANVTAIDLDLNPKLEYHILSIVAKDDTDRLVPDQEDAFAVNINTGSVIVKSPLNRELVATYEVTLSVIDNASDLPERSVSVPNAKLTVNILDVNDNTPQFKPFGITYYTERVLEGATPGTTLIAVAAVDPDKGLNGLITYTLLDLIPPGYVQLEDSSAGKVIANRTVDYEEVHWLNFTVRASDNGSPPRAAEIPVYLEIVDINDNNPIFDQLSYQEAVFEDVAVGTVILRVTATDADSGNFALIEYSLVDGEGKFAINPNTGDIYVLSSLDREKKDHYILTALAKDNPGDVASNRRENSVQVVIRVLDVNDCRPQFSKPQFSTSVYENEPAGTSVITMLATDQDEGSNGQLTYSLEGPGMEAFSVDMDSGLVTTQRPLQSYERFNLTVVATDGGEPPLWGTTMLLVEVIDVNDNRPVFVRPPNGTILHIKEEIPLRSNVYEVYATDKDEGLNGAVRYSFLKSTGNRDWEYFTIDPISGLIQTAQRLDREKQAVYSLILVASDLGQPVPYETMQPLQVALEDIDDNEPLFVRPPKGSPQYQLLTVPEHSPRGTLVGNVTGAVDADEGPNAIVYYFIAAGNEDKNFHLQPDGRLLVLRDLDRETEAIFSFIVKASSNRSWTPPRGPSPALDLLTDLTLQEVRVVLEDINDQPPRFTKAEYTAGVATDAKVGSELIQVLALDADIGNNSLVFYGILAIHYFRALANDSEDVGQVFTMGSVDGILRTFDLFMAYSPGYFVVDIVARDLAGHNDTAIIGIYILRDDQRVKIVINEIPDRVRGFEEEFIRLLSNITGAIVNTDDVQFHVDMKGRVNFAQTELLIHVVNRDTNRILDVDRVIQMIDENKEQLRNLFRNYNVLDVQPAISVQLPDDMSALQMAIIVLAILLFLAAMLFVLMNWYYRTIHKRKLKAIVAGSAGNRGFIDIMDMPNTNKYSFDGANPVWLDPFCRNLELAAQAEHEDDLPENLSEIADLWNSPTRTHGTFGREPAAVKPEDDRYLRAAIQEYDNIAKLGQIIREGPIKLIHTDLEEEPGDHSPGQGSLRFRHKPPTELKGPDGIHIVHGSTGTLLATDLNSLPEDDQKGLDRSLETLTASEATAFERNARTESAKSTPLHKLRDVIMESPLEITEL.

The first 23 residues, 1–23 (MRHPPVTWCAMLWLLMLVSGSWG), serve as a signal peptide directing secretion. Topologically, residues 24–3062 (QVNRLPFFTN…SVQLPDDMSA (3039 aa)) are extracellular. 27 consecutive Cadherin domains span residues 34–132 (HFFD…APTF), 133–236 (HNQP…DPIF), 237–348 (INLP…APEF), 349–458 (NSSE…RPIF), 459–559 (SQPL…VPTF), 560–669 (QKDA…PPTF), 670–782 (SKPA…APYY), 777–888 (KDAP…DPTF), 889–993 (QNLP…TPTF), 994–1100 (FPAV…RPIF), 1101–1206 (LQSS…APVF), 1208–1311 (QQQY…AVQF), 1312–1416 (SNAS…SPRF), 1418–1525 (FTSD…PPVI), 1527–1632 (SPFG…APVF), 1633–1742 (QQPH…VPTF), 1743–1849 (PRDY…DPVL), 1850–1957 (LNLP…HPLF), 1958–2067 (TEGT…WPTF), 2068–2172 (SPPA…RPEF), 2173–2291 (LNPI…TPQF), 2295–2400 (GITY…NPIF), 2401–2507 (DQLS…RPQF), 2508–2609 (SKPQ…RPVF), 2612–2720 (PPNG…EPLF), 2727–2844 (SPQY…PPRF), and 2845–2973 (TKAE…EEEF). Asn-155 and Asn-206 each carry an N-linked (GlcNAc...) asparagine glycan. N-linked (GlcNAc...) asparagine glycans are attached at residues Asn-349, Asn-391, Asn-432, Asn-464, Asn-470, Asn-600, Asn-692, Asn-763, Asn-808, Asn-825, Asn-939, Asn-999, Asn-1016, Asn-1169, Asn-1280, Asn-1313, Asn-1471, Asn-1532, Asn-1649, Asn-1665, Asn-1816, Asn-1855, Asn-1887, Asn-1900, Asn-2012, Asn-2048, Asn-2127, Asn-2166, Asn-2193, Asn-2261, Asn-2355, and Asn-2367. N-linked (GlcNAc...) asparagine glycans are attached at residues Asn-2576, Asn-2614, Asn-2747, Asn-2806, Asn-2875, Asn-2894, Asn-2939, and Asn-2979. The chain crosses the membrane as a helical span at residues 3063–3083 (LQMAIIVLAILLFLAAMLFVL). The Cytoplasmic portion of the chain corresponds to 3084 to 3317 (MNWYYRTIHK…MESPLEITEL (234 aa)).

As to quaternary structure, antiparallel heterodimer with PCDH15. Interacts with USH1C and USH1G.

The protein localises to the cell membrane. In terms of biological role, cadherins are calcium-dependent cell adhesion proteins. They preferentially interact with themselves in a homophilic manner in connecting cells. CDH23 is required for establishing and/or maintaining the proper organization of the stereocilia bundle of hair cells in the cochlea and the vestibule during late embryonic/early postnatal development. It is part of the functional network formed by USH1C, USH1G, CDH23 and MYO7A that mediates mechanotransduction in cochlear hair cells. Required for normal hearing. The sequence is that of Cadherin-23 (Cdh23) from Rattus norvegicus (Rat).